We begin with the raw amino-acid sequence, 131 residues long: Sulfurtransferase TusD (131 aa).

The active-site Cysteine persulfide intermediate is the Cys-81.

This sequence belongs to the DsrE/TusD family. Heterohexamer, formed by a dimer of trimers. The hexameric TusBCD complex contains 2 copies each of TusB, TusC and TusD. The TusBCD complex interacts with TusE.

It localises to the cytoplasm. Part of a sulfur-relay system required for 2-thiolation of 5-methylaminomethyl-2-thiouridine (mnm(5)s(2)U) at tRNA wobble positions. Accepts sulfur from TusA and transfers it in turn to TusE. This is Sulfurtransferase TusD from Yersinia pseudotuberculosis serotype O:1b (strain IP 31758).